Consider the following 427-residue polypeptide: Glutamate-1-semialdehyde 2,1-aminomutase (427 aa).

Lys-265 is modified (N6-(pyridoxal phosphate)lysine).

Belongs to the class-III pyridoxal-phosphate-dependent aminotransferase family. HemL subfamily. In terms of assembly, homodimer. Pyridoxal 5'-phosphate is required as a cofactor.

It is found in the cytoplasm. The enzyme catalyses (S)-4-amino-5-oxopentanoate = 5-aminolevulinate. The protein operates within porphyrin-containing compound metabolism; protoporphyrin-IX biosynthesis; 5-aminolevulinate from L-glutamyl-tRNA(Glu): step 2/2. This Pseudomonas syringae pv. tomato (strain ATCC BAA-871 / DC3000) protein is Glutamate-1-semialdehyde 2,1-aminomutase.